We begin with the raw amino-acid sequence, 203 residues long: V-type ATP synthase subunit D (203 aa).

This sequence belongs to the V-ATPase D subunit family.

In terms of biological role, produces ATP from ADP in the presence of a proton gradient across the membrane. The polypeptide is V-type ATP synthase subunit D (Chlamydia trachomatis serovar L2 (strain ATCC VR-902B / DSM 19102 / 434/Bu)).